A 96-amino-acid chain; its full sequence is Pro-glucagon (96 aa).

2 stretches are compositionally biased toward basic and acidic residues: residues 1–12 (LQDAEDSSRFDA) and 19–30 (EARELSTPKXHS). The interval 1–35 (LQDAEDSSRFDADDTLAGEARELSTPKXHSEGTFS) is disordered.

It belongs to the glucagon family.

The protein localises to the secreted. Functionally, plays a key role in glucose metabolism and homeostasis. Regulates blood glucose by increasing gluconeogenesis and decreasing glycolysis. The sequence is that of Pro-glucagon (gcg) from Myoxocephalus scorpius (Shorthorn sculpin).